Here is a 387-residue protein sequence, read N- to C-terminus: Queuine tRNA-ribosyltransferase (387 aa).

The Proton acceptor role is filled by D102. Substrate contacts are provided by residues 102–106, D156, Q205, and G232; that span reads DSGGF. The tract at residues 263–269 is RNA binding; it reads GVGTPED. The active-site Nucleophile is D282. The tract at residues 287–291 is RNA binding; important for wobble base 34 recognition; the sequence is TRNAR. C320, C322, C325, and H351 together coordinate Zn(2+).

This sequence belongs to the queuine tRNA-ribosyltransferase family. Homodimer. Within each dimer, one monomer is responsible for RNA recognition and catalysis, while the other monomer binds to the replacement base PreQ1. Zn(2+) serves as cofactor.

The enzyme catalyses 7-aminomethyl-7-carbaguanine + guanosine(34) in tRNA = 7-aminomethyl-7-carbaguanosine(34) in tRNA + guanine. It functions in the pathway tRNA modification; tRNA-queuosine biosynthesis. Functionally, catalyzes the base-exchange of a guanine (G) residue with the queuine precursor 7-aminomethyl-7-deazaguanine (PreQ1) at position 34 (anticodon wobble position) in tRNAs with GU(N) anticodons (tRNA-Asp, -Asn, -His and -Tyr). Catalysis occurs through a double-displacement mechanism. The nucleophile active site attacks the C1' of nucleotide 34 to detach the guanine base from the RNA, forming a covalent enzyme-RNA intermediate. The proton acceptor active site deprotonates the incoming PreQ1, allowing a nucleophilic attack on the C1' of the ribose to form the product. After dissociation, two additional enzymatic reactions on the tRNA convert PreQ1 to queuine (Q), resulting in the hypermodified nucleoside queuosine (7-(((4,5-cis-dihydroxy-2-cyclopenten-1-yl)amino)methyl)-7-deazaguanosine). The protein is Queuine tRNA-ribosyltransferase of Polaromonas naphthalenivorans (strain CJ2).